Reading from the N-terminus, the 365-residue chain is Cobalt-precorrin-5B C(1)-methyltransferase (365 aa).

The protein belongs to the CbiD family.

It carries out the reaction Co-precorrin-5B + S-adenosyl-L-methionine = Co-precorrin-6A + S-adenosyl-L-homocysteine. It functions in the pathway cofactor biosynthesis; adenosylcobalamin biosynthesis; cob(II)yrinate a,c-diamide from sirohydrochlorin (anaerobic route): step 6/10. Its function is as follows. Catalyzes the methylation of C-1 in cobalt-precorrin-5B to form cobalt-precorrin-6A. This Methanococcus maripaludis (strain C5 / ATCC BAA-1333) protein is Cobalt-precorrin-5B C(1)-methyltransferase.